The chain runs to 246 residues: 5'-nucleotidase SurE (246 aa).

Asp8, Asp9, Ser39, and Asn91 together coordinate a divalent metal cation.

This sequence belongs to the SurE nucleotidase family. A divalent metal cation serves as cofactor.

It is found in the cytoplasm. It carries out the reaction a ribonucleoside 5'-phosphate + H2O = a ribonucleoside + phosphate. Functionally, nucleotidase that shows phosphatase activity on nucleoside 5'-monophosphates. This chain is 5'-nucleotidase SurE, found in Dechloromonas aromatica (strain RCB).